A 158-amino-acid chain; its full sequence is Ribosome maturation factor RimP (158 aa).

It belongs to the RimP family.

Its subcellular location is the cytoplasm. Its function is as follows. Required for maturation of 30S ribosomal subunits. The polypeptide is Ribosome maturation factor RimP (Pseudomonas fluorescens (strain SBW25)).